We begin with the raw amino-acid sequence, 208 residues long: Large ribosomal subunit protein uL4 (208 aa).

The interval 50–83 (VKTRAEVSGGGRKPWKQKGTGRARQGSIRAPQWK) is disordered.

This sequence belongs to the universal ribosomal protein uL4 family. In terms of assembly, part of the 50S ribosomal subunit.

Its function is as follows. One of the primary rRNA binding proteins, this protein initially binds near the 5'-end of the 23S rRNA. It is important during the early stages of 50S assembly. It makes multiple contacts with different domains of the 23S rRNA in the assembled 50S subunit and ribosome. In terms of biological role, forms part of the polypeptide exit tunnel. This chain is Large ribosomal subunit protein uL4, found in Mycoplasma capricolum subsp. capricolum (strain California kid / ATCC 27343 / NCTC 10154).